The chain runs to 36 residues: Kappa-theraphotoxin-Pg1a (36 aa).

Cystine bridges form between C4–C19, C11–C24, and C18–C31.

The protein belongs to the neurotoxin 10 (Hwtx-1) family. 44 (Jztx-4) subfamily. As to expression, expressed by the venom gland.

The protein resides in the secreted. Gating modifier of Kv2.1/KCNB1 (IC(50)=5.1 nM), Kv2.2/KCNB2 and Kv4.3/KCND3 channels (IC(50)=39 nM). Acts by shifting the channel activation to more depolarized potentials by stabilizing the resting conformation of the voltage sensor. It completely inhibits opening of the Kv2.1/KCNB1 channel at negative membrane voltages and dramatically shifts channel activation to positive voltages. May act by partitioning into lipid membranes and then by binding the voltage sensor paddle of the channel from a place within the membrane. The chain is Kappa-theraphotoxin-Pg1a from Chilobrachys guangxiensis (Chinese earth tiger tarantula).